The following is a 223-amino-acid chain: MIFGKIDYINLLPLHIYLKKYPLPNGYKANMEYKKGVPSKLNKDLFYRRIDAAIISSIESARKKYKNLDLGICANKRVLSVLVEKNTSNAKDPSSATSNALAKVLKQDGKVIIGDKALKLYLKDPSKYIDLCAKWHEKTGLPFVFARFSCVQKKALYKQILKKFPKTKIKIPYYILQNYAKTRDLDIKDVRYYLDEVIYHKISTKEKTALKRFVKACKALNLA.

This sequence belongs to the MqnA/MqnD family. MqnA subfamily.

The catalysed reaction is chorismate = 3-[(1-carboxyvinyl)-oxy]benzoate + H2O. It functions in the pathway quinol/quinone metabolism; menaquinone biosynthesis. Functionally, catalyzes the dehydration of chorismate into 3-[(1-carboxyvinyl)oxy]benzoate, a step in the biosynthesis of menaquinone (MK, vitamin K2). This is Chorismate dehydratase from Campylobacter jejuni subsp. jejuni serotype O:23/36 (strain 81-176).